Consider the following 374-residue polypeptide: Queuine tRNA-ribosyltransferase (374 aa).

Asp89 acts as the Proton acceptor in catalysis. Substrate contacts are provided by residues 89–93 (DSGGF), Asp143, Gln187, and Gly214. The segment at 245-251 (GVGKPED) is RNA binding. Asp264 functions as the Nucleophile in the catalytic mechanism. The RNA binding; important for wobble base 34 recognition stretch occupies residues 269-273 (TRNAR). Positions 302, 304, 307, and 333 each coordinate Zn(2+).

It belongs to the queuine tRNA-ribosyltransferase family. As to quaternary structure, homodimer. Within each dimer, one monomer is responsible for RNA recognition and catalysis, while the other monomer binds to the replacement base PreQ1. Zn(2+) serves as cofactor.

It carries out the reaction 7-aminomethyl-7-carbaguanine + guanosine(34) in tRNA = 7-aminomethyl-7-carbaguanosine(34) in tRNA + guanine. Its pathway is tRNA modification; tRNA-queuosine biosynthesis. In terms of biological role, catalyzes the base-exchange of a guanine (G) residue with the queuine precursor 7-aminomethyl-7-deazaguanine (PreQ1) at position 34 (anticodon wobble position) in tRNAs with GU(N) anticodons (tRNA-Asp, -Asn, -His and -Tyr). Catalysis occurs through a double-displacement mechanism. The nucleophile active site attacks the C1' of nucleotide 34 to detach the guanine base from the RNA, forming a covalent enzyme-RNA intermediate. The proton acceptor active site deprotonates the incoming PreQ1, allowing a nucleophilic attack on the C1' of the ribose to form the product. After dissociation, two additional enzymatic reactions on the tRNA convert PreQ1 to queuine (Q), resulting in the hypermodified nucleoside queuosine (7-(((4,5-cis-dihydroxy-2-cyclopenten-1-yl)amino)methyl)-7-deazaguanosine). The polypeptide is Queuine tRNA-ribosyltransferase (Yersinia pseudotuberculosis serotype O:1b (strain IP 31758)).